The primary structure comprises 316 residues: MPKKKTGARKKAENRREREKQLRASRSTVDLAKHPCNASMECDKCQRRQKNRAFCYFCNSVQKLPICAQCGKTKCMMKSSDCVIKHAGVYSTGLAMVGAICDFCEAWVCHGRKCLSTHACACPLTDAECVECERGVWDHGGRIFSCSFCHNFLCEDDQFEHQASCQVLEAETFKCVSCNRLGQHSCLRCKACFCDEHTRSKVFKQEKGKQPPCPKCGHETQETKDLSMSTRSLKFGRQTGGEEDGASGYDAYWKNLSSDKYGDTGYHDDDEEEDEAEDEEEEDGKDSDAESSDLFNNLNLGRTYASGYAHYEEQES.

Residues Met-1–Ala-24 form a disordered region. The Nuclear localization signal motif lies at Lys-3–Lys-11. The segment covering Lys-10–Leu-22 has biased composition (basic and acidic residues). C4-type zinc fingers lie at residues Cys-42–Cys-58, Cys-67–Cys-104, Cys-129–Cys-149, and Cys-175–Cys-189. A disordered region spans residues Ser-227–Asn-299. Residues Asp-268–Ser-291 are compositionally biased toward acidic residues. A Phosphoserine modification is found at Ser-287.

Belongs to the NOA36 family.

It localises to the nucleus. It is found in the nucleolus. The protein resides in the chromosome. The protein localises to the centromere. The chain is Zinc finger protein 330 (Znf330) from Mus musculus (Mouse).